Consider the following 543-residue polypeptide: Gap junction alpha-10 protein (543 aa).

Residues 1 to 16 (MGDWNLLGGILEEVHS) are Cytoplasmic-facing. The helical transmembrane segment at 17–37 (HSTIVGKIWLTILFIFRMLVL) threads the bilayer. Topologically, residues 38–76 (RVAAEDVWDDEQSAFACNTRQPGCNNICYDDAFPISLIR) are extracellular. Residues 77-97 (FWVLQIIFVSSPSLVYMGHAL) traverse the membrane as a helical segment. The Cytoplasmic segment spans residues 98–165 (YRLRAFEKDR…TYVLHILTRS (68 aa)). The helical transmembrane segment at 166-186 (VLEVGFMIGQYILYGFQMHPL) threads the bilayer. The Extracellular segment spans residues 187 to 209 (YKCTQPPCPNAVDCFVSRPTEKT). The chain crosses the membrane as a helical span at residues 210 to 230 (IFMLFMHSIAAISLLLNILEI). The Cytoplasmic segment spans residues 231–543 (FHLGIRKIMR…HSIHSVKFNS (313 aa)). 2 disordered regions span residues 306 to 359 (PQPR…SSFG) and 379 to 424 (PSFA…DRSR). Residues 317–328 (NGKKDWSEKDQH) show a composition bias toward basic and acidic residues. Polar residues predominate over residues 344 to 359 (AGNQHLGQQSDHSSFG). Residues 400–413 (TDLHSHCRDSEGSM) are compositionally biased toward basic and acidic residues.

It belongs to the connexin family. Alpha-type (group II) subfamily. A connexon is composed of a hexamer of connexins. As to expression, expressed in skeletal muscle and heart.

The protein resides in the cell membrane. It localises to the cell junction. Its subcellular location is the gap junction. One gap junction consists of a cluster of closely packed pairs of transmembrane channels, the connexons, through which materials of low MW diffuse from one cell to a neighboring cell. Involved in tracer coupling between horizontal cells of the retina. May play a role in the regulation of horizontal cell patterning. In Homo sapiens (Human), this protein is Gap junction alpha-10 protein (GJA10).